The following is a 240-amino-acid chain: DNA repair protein RecO (240 aa).

This sequence belongs to the RecO family.

Involved in DNA repair and RecF pathway recombination. The polypeptide is DNA repair protein RecO (Pseudoalteromonas atlantica (strain T6c / ATCC BAA-1087)).